The chain runs to 269 residues: 23S rRNA (adenosine(1067)-2'-O)-methyltransferase (269 aa).

6 residues coordinate S-adenosyl-L-methionine: R135, R165, L195, G218, I238, and L247.

The protein belongs to the class IV-like SAM-binding methyltransferase superfamily. RNA methyltransferase TsnR/AvirB family. In terms of assembly, homodimer.

The catalysed reaction is adenosine(1067) in 23S rRNA + S-adenosyl-L-methionine = 2'-O-methyladenosine(1067) in 23S rRNA + S-adenosyl-L-homocysteine + H(+). Its function is as follows. Specifically methylates the adenosine-1067 in 23S ribosomal RNA. Confers resistance to antibiotic thiostrepton. This chain is 23S rRNA (adenosine(1067)-2'-O)-methyltransferase (tsnR), found in Streptomyces azureus.